The chain runs to 513 residues: Glycine/sarcosine/betaine reductase complex component C subunit beta (513 aa).

As to quaternary structure, heterooctamer of four alpha and four beta subunits. Component of the glycine, sarcosine and betaine reductase complexes, together with proteins A and B.

It catalyses the reaction acetyl phosphate + [thioredoxin]-disulfide + NH4(+) + H2O = [thioredoxin]-dithiol + glycine + phosphate + H(+). The catalysed reaction is acetyl phosphate + methylamine + [thioredoxin]-disulfide + H2O = sarcosine + [thioredoxin]-dithiol + phosphate + H(+). The enzyme catalyses acetyl phosphate + trimethylamine + [thioredoxin]-disulfide + H2O = glycine betaine + [thioredoxin]-dithiol + phosphate + H(+). Functionally, in the first step of glycine, betaine and sarcosine reductases, the substrate is bound to component PB via a Schiff base intermediate. Then the PB-activated substrate is nucleophilically attacked by the selenol anion of component PA to transform it to a carboxymethylated selenoether and the respective amine. By action of component PC, acetyl phosphate is formed, leaving component PA in its oxidized state. Finally component PA becomes reduced by the thioredoxin system to start a new catalytic cycle of reductive deamination. The protein is Glycine/sarcosine/betaine reductase complex component C subunit beta (grdC) of Peptoclostridium acidaminophilum (Eubacterium acidaminophilum).